The following is a 507-amino-acid chain: Beta-Ala-His dipeptidase (507 aa).

The signal sequence occupies residues 1 to 26; that stretch reads MDPKLGRMAASLLAVLLLLLERGMFS. A Zn(2+)-binding site is contributed by His132. The active site involves Asp134. Asp165 contributes to the Zn(2+) binding site. Residue Glu199 is the Proton acceptor of the active site. Glu200 serves as a coordination point for Zn(2+). A Phosphoserine modification is found at Ser219. Asp228 serves as a coordination point for Zn(2+). Residues Asn322 and Asn382 are each glycosylated (N-linked (GlcNAc...) asparagine). Residue His478 participates in Zn(2+) binding.

It belongs to the peptidase M20A family. Homodimer. Requires Zn(2+) as cofactor. In terms of tissue distribution, found in serum and adult nervous central system. Absent in serum from patients with homocarnosinosis.

It localises to the secreted. It catalyses the reaction Preferential hydrolysis of the beta-Ala-|-His dipeptide (carnosine), and also anserine, Xaa-|-His dipeptides and other dipeptides including homocarnosine.. It carries out the reaction carnosine + H2O = beta-alanine + L-histidine. The catalysed reaction is anserine + H2O = N(pros)-methyl-L-histidine + beta-alanine. The enzyme catalyses L-alanyl-L-histidine + H2O = L-histidine + L-alanine. It catalyses the reaction glycyl-L-histidine + H2O = L-histidine + glycine. It carries out the reaction L-homocarnosine + H2O = 4-aminobutanoate + L-histidine. Its activity is regulated as follows. Activated by cadmium ions. Inhibited by the metal chelator 1,10-o-phenantrolin. The inhibitory concentration 50% (IC(50)) is 5 uM. In terms of biological role, catalyzes the peptide bond hydrolysis in Xaa-His dipeptides, displaying the highest activity toward carnosine (beta-alanyl-L-histidine) and anserine (beta-alanyl-3-methyl-histidine). The sequence is that of Beta-Ala-His dipeptidase from Homo sapiens (Human).